Reading from the N-terminus, the 138-residue chain is Small ribosomal subunit protein uS11c (138 aa).

The disordered stretch occupies residues 1-24; that stretch reads MTKPIPRIGSRKNGRISSRKNGRR. The segment covering 9 to 24 has biased composition (basic residues); the sequence is GSRKNGRISSRKNGRR.

It belongs to the universal ribosomal protein uS11 family. In terms of assembly, part of the 30S ribosomal subunit.

The protein resides in the plastid. The protein localises to the chloroplast. This Chloranthus spicatus (Chulantree) protein is Small ribosomal subunit protein uS11c.